The sequence spans 336 residues: tRNA N6-adenosine threonylcarbamoyltransferase (336 aa).

Fe cation is bound by residues histidine 114 and histidine 118. Residues 136 to 140, aspartate 169, glycine 182, aspartate 186, and asparagine 275 contribute to the substrate site; that span reads LVSGG. Residue aspartate 301 coordinates Fe cation.

It belongs to the KAE1 / TsaD family. Fe(2+) serves as cofactor.

It is found in the cytoplasm. The enzyme catalyses L-threonylcarbamoyladenylate + adenosine(37) in tRNA = N(6)-L-threonylcarbamoyladenosine(37) in tRNA + AMP + H(+). Its function is as follows. Required for the formation of a threonylcarbamoyl group on adenosine at position 37 (t(6)A37) in tRNAs that read codons beginning with adenine. Is involved in the transfer of the threonylcarbamoyl moiety of threonylcarbamoyl-AMP (TC-AMP) to the N6 group of A37, together with TsaE and TsaB. TsaD likely plays a direct catalytic role in this reaction. In Streptococcus gordonii (strain Challis / ATCC 35105 / BCRC 15272 / CH1 / DL1 / V288), this protein is tRNA N6-adenosine threonylcarbamoyltransferase.